The following is a 455-amino-acid chain: mRNA cleavage and polyadenylation factor CLP1 (455 aa).

ATP is bound by residues E28 and K67. Positions 112–131 (EAAARNNGGGRSAPHGPRVL) are disordered. 137 to 142 (GCGRTS) is a binding site for ATP.

This sequence belongs to the Clp1 family. Clp1 subfamily. As to quaternary structure, component of a pre-mRNA cleavage factor complex. Interacts directly with PCF11.

The protein localises to the nucleus. Functionally, required for endonucleolytic cleavage during polyadenylation-dependent pre-mRNA 3'-end formation. In Pyricularia oryzae (strain 70-15 / ATCC MYA-4617 / FGSC 8958) (Rice blast fungus), this protein is mRNA cleavage and polyadenylation factor CLP1.